The following is a 358-amino-acid chain: Molybdenum import ATP-binding protein ModC 2 (358 aa).

Residues 1 to 234 (MPEQGIEAQL…PRLPLNHPDE (234 aa)) form the ABC transporter domain. 35–42 (GRSGSGKT) lines the ATP pocket. A Mop domain is found at 293 to 358 (NSSILNILRV…AQIKSVALME (66 aa)).

This sequence belongs to the ABC transporter superfamily. Molybdate importer (TC 3.A.1.8) family. The complex is composed of two ATP-binding proteins (ModC), two transmembrane proteins (ModB) and a solute-binding protein (ModA).

It localises to the cell inner membrane. The enzyme catalyses molybdate(out) + ATP + H2O = molybdate(in) + ADP + phosphate + H(+). In terms of biological role, part of the ABC transporter complex ModABC involved in molybdenum import. Responsible for energy coupling to the transport system. This Azotobacter vinelandii protein is Molybdenum import ATP-binding protein ModC 2.